The sequence spans 89 residues: Small ribosomal subunit protein uS17 (89 aa).

The protein belongs to the universal ribosomal protein uS17 family. In terms of assembly, part of the 30S ribosomal subunit.

In terms of biological role, one of the primary rRNA binding proteins, it binds specifically to the 5'-end of 16S ribosomal RNA. This chain is Small ribosomal subunit protein uS17, found in Polaromonas sp. (strain JS666 / ATCC BAA-500).